We begin with the raw amino-acid sequence, 161 residues long: MSSFTHFNDQGRAKMVDISDKKATVRTAIARSSIVVTKEIYDKISHNEIGKGDVLAVAQIAGIMAAKRTSDIIPMCHPLLLKGVDVSFDWKQSDEQYRLLIEVKVKTEGSTGVEMEALTAASATALTVYDMCKAVDKGMIIGETYLLEKTGGKSGDYTRKS.

Residues 75–77 (MCH) and 115–116 (ME) contribute to the substrate site. D130 is an active-site residue.

This sequence belongs to the MoaC family. As to quaternary structure, homohexamer; trimer of dimers.

The enzyme catalyses (8S)-3',8-cyclo-7,8-dihydroguanosine 5'-triphosphate = cyclic pyranopterin phosphate + diphosphate. It functions in the pathway cofactor biosynthesis; molybdopterin biosynthesis. Functionally, catalyzes the conversion of (8S)-3',8-cyclo-7,8-dihydroguanosine 5'-triphosphate to cyclic pyranopterin monophosphate (cPMP). This Bacillus thuringiensis subsp. konkukian (strain 97-27) protein is Cyclic pyranopterin monophosphate synthase.